A 377-amino-acid polypeptide reads, in one-letter code: Homocitrate synthase 1 (377 aa).

Residues 4-255 (VLINDTTLRD…DMGIDTPRLL (252 aa)) form the Pyruvate carboxyltransferase domain.

This sequence belongs to the alpha-IPM synthase/homocitrate synthase family.

The enzyme catalyses acetyl-CoA + 2-oxoglutarate + H2O = (2R)-homocitrate + CoA + H(+). Functionally, this protein is a Fe-Mo-cofactor biosynthetic component. The sequence is that of Homocitrate synthase 1 (nifV1) from Nostoc sp. (strain PCC 7120 / SAG 25.82 / UTEX 2576).